A 487-amino-acid polypeptide reads, in one-letter code: Glutamyl-tRNA(Gln) amidotransferase subunit A (487 aa).

Active-site charge relay system residues include Lys-80 and Ser-155. Catalysis depends on Ser-179, which acts as the Acyl-ester intermediate.

The protein belongs to the amidase family. GatA subfamily. As to quaternary structure, heterotrimer of A, B and C subunits.

The enzyme catalyses L-glutamyl-tRNA(Gln) + L-glutamine + ATP + H2O = L-glutaminyl-tRNA(Gln) + L-glutamate + ADP + phosphate + H(+). In terms of biological role, allows the formation of correctly charged Gln-tRNA(Gln) through the transamidation of misacylated Glu-tRNA(Gln) in organisms which lack glutaminyl-tRNA synthetase. The reaction takes place in the presence of glutamine and ATP through an activated gamma-phospho-Glu-tRNA(Gln). In Leptospira interrogans serogroup Icterohaemorrhagiae serovar Lai (strain 56601), this protein is Glutamyl-tRNA(Gln) amidotransferase subunit A.